The primary structure comprises 629 residues: ATP-dependent RNA helicase DeaD (629 aa).

A Q motif motif is present at residues threonine 6–alanine 34. The Helicase ATP-binding domain maps to isoleucine 37–valine 208. Alanine 50–threonine 57 is an ATP binding site. Residues aspartate 156–aspartate 159 carry the DEAD box motif. A Helicase C-terminal domain is found at lysine 232–leucine 379. Disordered stretches follow at residues leucine 438 to arginine 481 and leucine 560 to alanine 629. Basic and acidic residues-rich tracts occupy residues methionine 446–arginine 481 and glycine 568–alanine 629.

The protein belongs to the DEAD box helicase family. DeaD/CsdA subfamily. As to quaternary structure, interacts with the 50S ribosomal subunit upon shifting to 15 degrees Celsius. Also found associated with the RNA degradosome at 15 degrees Celsius; binds RNase E (rne).

Its subcellular location is the cytoplasm. It catalyses the reaction ATP + H2O = ADP + phosphate + H(+). Its function is as follows. DEAD-box RNA helicase involved in various cellular processes at low temperature, including ribosome biogenesis, mRNA degradation and translation initiation. Exhibits RNA-stimulated ATP hydrolysis and RNA unwinding activity at low temperature. Involved in 50S ribosomal subunit assembly, acting after SrmB, and could also play a role in the biogenesis of the 30S ribosomal subunit. In addition, is involved in mRNA decay, via formation of a cold-shock degradosome with RNase E. Also stimulates translation of some mRNAs, probably at the level of initiation. In Escherichia coli (strain K12), this protein is ATP-dependent RNA helicase DeaD.